A 176-amino-acid chain; its full sequence is MSWRSEQIWIELIPGSRRESNFLWAFILFFGSLEFILVGTASYLRQNLIAFFPQGMVMTFYGISGLFISLYLLSMLFWNVGGGYHQFDKTRGVICIFRWVFPGRNRRLLLRFFMKDIRSIRIEVKEGFYTRRVLYMDIRGQKGIPLTRTDEVLTPVEIEKKAAELASFLCVPIEVL.

Helical transmembrane passes span 22 to 42 (FLWAFILFFGSLEFILVGTAS) and 57 to 77 (VMTFYGISGLFISLYLLSMLF).

This sequence belongs to the Ycf4 family.

The protein resides in the plastid thylakoid membrane. Functionally, seems to be required for the assembly of the photosystem I complex. The sequence is that of Photosystem I assembly protein Ycf4 from Cuscuta obtusiflora (Peruvian dodder).